Reading from the N-terminus, the 211-residue chain is Claudin-13 (211 aa).

At 1 to 8 (MVVSKQEA) the chain is on the cytoplasmic side. A helical membrane pass occupies residues 9-29 (ISFSVTSLGWVGAIVSCVLPV). The Extracellular portion of the chain corresponds to 30–80 (WRVTFPDDETDPDATIWEGLWHICQVRENRWIQCTLYDTRILVAQDIKVSR). Residues 81–101 (VFMVICTIGTWLGLLLCVLGD) form a helical membrane-spanning segment. Residues 102–118 (WRINCFMNFTIEENLLK) lie on the Cytoplasmic side of the membrane. A helical membrane pass occupies residues 119–139 (VAGGMFLSVGLLMLVPLSWVT). Over 140 to 165 (HNIIHGFFNPLLGFSKKVQMGSSLSL) the chain is Extracellular. The chain crosses the membrane as a helical span at residues 166-186 (AWTSSLLLLLGGILLCVNIPV). The Cytoplasmic segment spans residues 187 to 211 (CRDFPRCIETPSARPSGANNDTLDV).

This sequence belongs to the claudin family.

Its subcellular location is the cell junction. It is found in the tight junction. The protein resides in the cell membrane. In terms of biological role, plays a major role in tight junction-specific obliteration of the intercellular space, through calcium-independent cell-adhesion activity. This chain is Claudin-13 (Cldn13), found in Mus musculus (Mouse).